Consider the following 199-residue polypeptide: MAKVLVLYYSSWGHVEQMAKAVAEGARETGAEVALKRVPELVPDEVAKQFHYKLDQEAPIATVEELADYDAIIFGTPTRYGNMASQMKQFIDQTGGLWAKGALVGKVGSAFTSTASQHGGQETTLTSFHTVLFHHGMVVVGLPYSFAGQNGVEQVKGNSPYGATTIADGDGSRQPSEVELDGARFQGRHVAGIAAKLAG.

In terms of domain architecture, Flavodoxin-like spans 4–190 (VLVLYYSSWG…DGARFQGRHV (187 aa)). FMN contacts are provided by residues 10 to 15 (SSWGHV) and 78 to 80 (TRY). Trp-12 lines the NAD(+) pocket. Trp-98 contributes to the substrate binding site. FMN is bound by residues 113 to 119 (STASQHG) and His-134.

Belongs to the WrbA family. FMN is required as a cofactor.

The enzyme catalyses a quinone + NADH + H(+) = a quinol + NAD(+). It carries out the reaction a quinone + NADPH + H(+) = a quinol + NADP(+). The protein is NAD(P)H dehydrogenase (quinone) of Methylorubrum extorquens (strain CM4 / NCIMB 13688) (Methylobacterium extorquens).